The sequence spans 467 residues: Acetyl-CoA decarbonylase/synthase complex subunit beta (467 aa).

Cysteine 193, cysteine 196, cysteine 282, and cysteine 284 together coordinate [Ni-Fe-S] cluster. The tract at residues 403 to 428 (RWAEEEEEEEEKAPEEEAPAEEPTME) is disordered. Acidic residues predominate over residues 405–426 (AEEEEEEEEKAPEEEAPAEEPT).

This sequence belongs to the CdhC family. As to quaternary structure, monomer. The ACDS complex is made up of alpha, epsilon, beta, gamma and delta chains with a probable stoichiometry of (alpha(2)epsilon(2))(4)-beta(8)-(gamma(1)delta(1))(8). Requires [Ni-Fe-S] cluster as cofactor.

It catalyses the reaction Co(I)-[corrinoid Fe-S protein] + acetyl-CoA + H(+) = methyl-Co(III)-[corrinoid Fe-S protein] + CO + CoA. Functionally, part of a complex that catalyzes the reversible cleavage of acetyl-CoA, allowing autotrophic growth from CO(2). The alpha-epsilon complex generates CO from CO(2), while the beta subunit (this protein) combines the CO with CoA and a methyl group to form acetyl-CoA. The methyl group, which is incorporated into acetyl-CoA, is transferred to the beta subunit by a corrinoid iron-sulfur protein (the gamma-delta complex). The chain is Acetyl-CoA decarbonylase/synthase complex subunit beta from Methanopyrus kandleri (strain AV19 / DSM 6324 / JCM 9639 / NBRC 100938).